The sequence spans 114 residues: MTATILMIAMTLSTILAILSFWLPQMTPDMEKLSPYECGFDPLGSMRLPFSMRFFLIAILFLLFDLEIALLLPFPWAAQLNTPSIVILWAALILTLLTLGLIYEWLQGGLEWAE.

3 consecutive transmembrane segments (helical) span residues 3–23 (ATIL…SFWL), 54–74 (FFLI…LLPF), and 85–105 (IVIL…IYEW).

This sequence belongs to the complex I subunit 3 family.

It is found in the mitochondrion membrane. The enzyme catalyses a ubiquinone + NADH + 5 H(+)(in) = a ubiquinol + NAD(+) + 4 H(+)(out). Functionally, core subunit of the mitochondrial membrane respiratory chain NADH dehydrogenase (Complex I) that is believed to belong to the minimal assembly required for catalysis. Complex I functions in the transfer of electrons from NADH to the respiratory chain. The immediate electron acceptor for the enzyme is believed to be ubiquinone. This Xenopus laevis (African clawed frog) protein is NADH-ubiquinone oxidoreductase chain 3 (mt-nd3).